A 517-amino-acid chain; its full sequence is Crotonobetaine/carnitine--CoA ligase (517 aa).

This sequence belongs to the ATP-dependent AMP-binding enzyme family.

The catalysed reaction is 4-(trimethylamino)butanoate + ATP + CoA = 4-(trimethylamino)butanoyl-CoA + AMP + diphosphate. It carries out the reaction crotonobetaine + ATP + CoA = crotonobetainyl-CoA + AMP + diphosphate. It catalyses the reaction (R)-carnitine + ATP + CoA = (R)-carnitinyl-CoA + AMP + diphosphate. The protein operates within amine and polyamine metabolism; carnitine metabolism. Functionally, catalyzes the transfer of CoA to carnitine, generating the initial carnitinyl-CoA needed for the CaiB reaction cycle. Also has activity toward crotonobetaine and gamma-butyrobetaine. This is Crotonobetaine/carnitine--CoA ligase from Salmonella arizonae (strain ATCC BAA-731 / CDC346-86 / RSK2980).